The following is a 196-amino-acid chain: Imidazoleglycerol-phosphate dehydratase (196 aa).

This sequence belongs to the imidazoleglycerol-phosphate dehydratase family.

It localises to the cytoplasm. It carries out the reaction D-erythro-1-(imidazol-4-yl)glycerol 3-phosphate = 3-(imidazol-4-yl)-2-oxopropyl phosphate + H2O. It participates in amino-acid biosynthesis; L-histidine biosynthesis; L-histidine from 5-phospho-alpha-D-ribose 1-diphosphate: step 6/9. In Desulfitobacterium hafniense (strain Y51), this protein is Imidazoleglycerol-phosphate dehydratase.